The primary structure comprises 318 residues: Large ribosomal subunit protein uL10 (318 aa).

Y24 is modified (phosphotyrosine). At T59 the chain carries Phosphothreonine. A Glycyl lysine isopeptide (Lys-Gly) (interchain with G-Cter in ubiquitin) cross-link involves residue K264. A disordered region spans residues 293 to 318 (TAAPAKVEAKEESEESDEDMGFGLFD). K298 participates in a covalent cross-link: Glycyl lysine isopeptide (Lys-Gly) (interchain with G-Cter in SUMO1); alternate. K298 is covalently cross-linked (Glycyl lysine isopeptide (Lys-Gly) (interchain with G-Cter in SUMO2); alternate). Residues 303–312 (EESEESDEDM) show a composition bias toward acidic residues. Phosphoserine is present on residues S305 and S308.

This sequence belongs to the universal ribosomal protein uL10 family. As to quaternary structure, P0 forms a pentameric complex by interaction with dimers of P1 and P2. Identified in a IGF2BP1-dependent mRNP granule complex containing untranslated mRNAs. Interacts with APEX1. Interacts with FMR1. Ubiquitinated at Lys-264 by RNF14 and RNF25 in response to ribosome collisions (ribosome stalling).

The protein localises to the nucleus. Its subcellular location is the cytoplasm. In terms of biological role, ribosomal protein P0 is the functional equivalent of E.coli protein L10. This is Large ribosomal subunit protein uL10 (RPLP0) from Bos taurus (Bovine).